We begin with the raw amino-acid sequence, 332 residues long: Ribosomal RNA small subunit methyltransferase C (332 aa).

The protein belongs to the methyltransferase superfamily. RsmC family. As to quaternary structure, monomer.

It is found in the cytoplasm. The catalysed reaction is guanosine(1207) in 16S rRNA + S-adenosyl-L-methionine = N(2)-methylguanosine(1207) in 16S rRNA + S-adenosyl-L-homocysteine + H(+). In terms of biological role, specifically methylates the guanine in position 1207 of 16S rRNA in the 30S particle. The protein is Ribosomal RNA small subunit methyltransferase C of Pseudomonas syringae pv. syringae (strain B728a).